The following is a 365-amino-acid chain: Aspartate-semialdehyde dehydrogenase (365 aa).

NADP(+)-binding residues include T13, G14, S15, V16, S38, S41, L85, and D86. The residue at position 13 (T13) is a Phosphothreonine. C156 serves as the catalytic Acyl-thioester intermediate. G188 lines the NADP(+) pocket. The active-site Proton acceptor is H256. A phosphoserine mark is found at S318 and S323. Position 343 (N343) interacts with NADP(+).

Belongs to the aspartate-semialdehyde dehydrogenase family. In terms of assembly, homotetramer.

Its subcellular location is the cytoplasm. The protein localises to the cytosol. It localises to the nucleus. It catalyses the reaction L-aspartate 4-semialdehyde + phosphate + NADP(+) = 4-phospho-L-aspartate + NADPH + H(+). Its pathway is amino-acid biosynthesis; L-methionine biosynthesis via de novo pathway; L-homoserine from L-aspartate: step 2/3. It participates in amino-acid biosynthesis; L-threonine biosynthesis; L-threonine from L-aspartate: step 2/5. Catalyzes the NADPH-dependent formation of L-aspartate 4-semialdehyde (L-ASA) by the reductive dephosphorylation of 4-phospho-L-aspartate. Mediates the second step in the biosynthesis of amino acids that derive from aspartate (the aspartate family of amino acids), including methioinine and threonine, the latter of which is a precursor to isoleucine. The sequence is that of Aspartate-semialdehyde dehydrogenase (HOM2) from Saccharomyces cerevisiae (strain ATCC 204508 / S288c) (Baker's yeast).